We begin with the raw amino-acid sequence, 866 residues long: Sphingomyelin phosphodiesterase 4 (866 aa).

Residues S169 and S285 each carry the phosphoserine modification. A Phosphothreonine modification is found at T708. S792 is modified (phosphoserine). Residues 822-842 traverse the membrane as a helical segment; sequence LLLAFFVASLFCVGPLPCTLL.

Requires Mg(2+) as cofactor. Widely expressed, with highest levels in heart and skeletal muscle. In terms of tissue distribution, expressed in skeletal muscle (at protein level). As to expression, expressed in skeletal muscle but a lower levels than isoform 1 (at protein level).

The protein localises to the endoplasmic reticulum membrane. Its subcellular location is the golgi apparatus membrane. It localises to the nucleus envelope. The protein resides in the cell membrane. It is found in the sarcolemma. The enzyme catalyses a sphingomyelin + H2O = phosphocholine + an N-acylsphing-4-enine + H(+). Its activity is regulated as follows. Activated by phosphatidylserine and tumor necrosis factor (TNF). Inhibited by scyphostatin. Its function is as follows. Catalyzes the hydrolysis of membrane sphingomyelin to form phosphorylcholine and ceramide. It has a relevant role in the homeostasis of membrane sphingolipids, thereby influencing membrane integrity, and endoplasmic reticulum organization and function. May sensitize cells to DNA damage-induced apoptosis. In skeletal muscle, mediates TNF-stimulated oxidant production. In Homo sapiens (Human), this protein is Sphingomyelin phosphodiesterase 4.